A 508-amino-acid chain; its full sequence is MEFSSRAAELTTLLESRMTNFYTNFQVDEIGRVVSVGDGIARVYGLNEIQAGEMVEFASGVKGIALNLENENVGIVVFGSDTAIKEGDLVKRTGSIVDVPAGKAMLGRVVDALGVPIDGRGALSDHERRRVEVKAPGIIERKSVHEPMQTGLKAVDSLVPIGRGQRELIIGDRQTGKTAIAIDTILNQKQMNSRATSESETLYCVYVAIGQKRSTVAQLVQILSEANALEYSILVAATASDPAPLQFLAPYSGCAMGEYFRDNGMHALIIYDDLSKQAVAYRQMSLLLRRPPGREAFPGDVFYLHSRLLERAAKRSDQTGAGSLTALPVIETQAGDVSAYIPTNVISITDGQICLETELFYRGIRPAINVGLSVSRVGSAAQLKAMKQACGSLKLELAQYREVAAFAQFGSDLDAATQALLNRGARLTEVLKQPQYAPLPIEKQILVIYAAVNGFCDRMPLDKIPQYERDILTTIKPELLQSLKGGLTSERKIELEKFLKEKAKNYTL.

171–178 contributes to the ATP binding site; that stretch reads GDRQTGKT.

It belongs to the ATPase alpha/beta chains family. F-type ATPases have 2 components, CF(1) - the catalytic core - and CF(0) - the membrane proton channel. CF(1) has five subunits: alpha(3), beta(3), gamma(1), delta(1), epsilon(1). CF(0) has three main subunits: a, b and c.

The protein resides in the mitochondrion. It localises to the mitochondrion inner membrane. Its function is as follows. Mitochondrial membrane ATP synthase (F(1)F(0) ATP synthase or Complex V) produces ATP from ADP in the presence of a proton gradient across the membrane which is generated by electron transport complexes of the respiratory chain. F-type ATPases consist of two structural domains, F(1) - containing the extramembraneous catalytic core, and F(0) - containing the membrane proton channel, linked together by a central stalk and a peripheral stalk. During catalysis, ATP synthesis in the catalytic domain of F(1) is coupled via a rotary mechanism of the central stalk subunits to proton translocation. Subunits alpha and beta form the catalytic core in F(1). Rotation of the central stalk against the surrounding alpha(3)beta(3) subunits leads to hydrolysis of ATP in three separate catalytic sites on the beta subunits. Subunit alpha does not bear the catalytic high-affinity ATP-binding sites. The chain is ATP synthase subunit alpha, mitochondrial (ATPA) from Phaseolus vulgaris (Kidney bean).